A 130-amino-acid polypeptide reads, in one-letter code: Universal stress protein MSMEG_4207 (130 aa).

The residue at position 104 (lysine 104) is an N6-acetyllysine.

The protein belongs to the universal stress protein A family. Acetylated on Lys-104 by PatA in the presence of acetyl-CoA as an acetyl donor.

This chain is Universal stress protein MSMEG_4207, found in Mycolicibacterium smegmatis (strain ATCC 700084 / mc(2)155) (Mycobacterium smegmatis).